The following is a 432-amino-acid chain: Golgin subfamily A member 6-like protein 9 (432 aa).

Residues methionine 1–proline 11 are compositionally biased toward pro residues. Disordered regions lie at residues methionine 1–glycine 77 and lysine 349–alanine 411. Residues asparagine 51 to glycine 62 are compositionally biased toward polar residues. Residues serine 157–serine 354 adopt a coiled-coil conformation. The span at lysine 349–glycine 362 shows a compositional bias: basic and acidic residues. The span at alanine 366–alanine 381 shows a compositional bias: low complexity.

It belongs to the GOLGA6 family.

The polypeptide is Golgin subfamily A member 6-like protein 9 (Homo sapiens (Human)).